The primary structure comprises 220 residues: Large ribosomal subunit protein uL3 (220 aa).

Belongs to the universal ribosomal protein uL3 family. As to quaternary structure, part of the 50S ribosomal subunit. Forms a cluster with proteins L14 and L19.

Its function is as follows. One of the primary rRNA binding proteins, it binds directly near the 3'-end of the 23S rRNA, where it nucleates assembly of the 50S subunit. In Staphylococcus haemolyticus (strain JCSC1435), this protein is Large ribosomal subunit protein uL3.